Consider the following 377-residue polypeptide: GDSL esterase/lipase 4 (377 aa).

The signal sequence occupies residues 1–21 (MASPRFNSIIIILFICTISLS). Serine 44 serves as the catalytic Nucleophile. Residues asparagine 135, asparagine 188, asparagine 194, asparagine 207, and asparagine 241 are each glycosylated (N-linked (GlcNAc...) asparagine). Residues aspartate 342 and histidine 345 contribute to the active site. Asparagine 364 carries N-linked (GlcNAc...) asparagine glycosylation.

The protein belongs to the 'GDSL' lipolytic enzyme family.

Its subcellular location is the secreted. This is GDSL esterase/lipase 4 (GLIP4) from Arabidopsis thaliana (Mouse-ear cress).